The sequence spans 483 residues: Probable glycine dehydrogenase (decarboxylating) subunit 2 (483 aa).

Lysine 264 carries the post-translational modification N6-(pyridoxal phosphate)lysine.

The protein belongs to the GcvP family. C-terminal subunit subfamily. As to quaternary structure, the glycine cleavage system is composed of four proteins: P, T, L and H. In this organism, the P 'protein' is a heterodimer of two subunits. Pyridoxal 5'-phosphate serves as cofactor.

The enzyme catalyses N(6)-[(R)-lipoyl]-L-lysyl-[glycine-cleavage complex H protein] + glycine + H(+) = N(6)-[(R)-S(8)-aminomethyldihydrolipoyl]-L-lysyl-[glycine-cleavage complex H protein] + CO2. Functionally, the glycine cleavage system catalyzes the degradation of glycine. The P protein binds the alpha-amino group of glycine through its pyridoxal phosphate cofactor; CO(2) is released and the remaining methylamine moiety is then transferred to the lipoamide cofactor of the H protein. This Nitrosomonas eutropha (strain DSM 101675 / C91 / Nm57) protein is Probable glycine dehydrogenase (decarboxylating) subunit 2.